We begin with the raw amino-acid sequence, 269 residues long: 1-(5-phosphoribosyl)-5-[(5-phosphoribosylamino)methylideneamino] imidazole-4-carboxamide isomerase (269 aa).

Aspartate 10 functions as the Proton acceptor in the catalytic mechanism. The Proton donor role is filled by aspartate 132.

Belongs to the HisA/HisF family.

The protein resides in the cytoplasm. It catalyses the reaction 1-(5-phospho-beta-D-ribosyl)-5-[(5-phospho-beta-D-ribosylamino)methylideneamino]imidazole-4-carboxamide = 5-[(5-phospho-1-deoxy-D-ribulos-1-ylimino)methylamino]-1-(5-phospho-beta-D-ribosyl)imidazole-4-carboxamide. The protein operates within amino-acid biosynthesis; L-histidine biosynthesis; L-histidine from 5-phospho-alpha-D-ribose 1-diphosphate: step 4/9. The protein is 1-(5-phosphoribosyl)-5-[(5-phosphoribosylamino)methylideneamino] imidazole-4-carboxamide isomerase of Xylella fastidiosa (strain Temecula1 / ATCC 700964).